The sequence spans 187 residues: Transcriptional repressor NrdR (187 aa).

Residues 3-34 fold into a zinc finger; sequence CPFCRHPDSRVVDSRTTDDGTSIRRRRQCPDC. An ATP-cone domain is found at 46-136; the sequence is LMVVKRSGVT…VYRAFDSLED (91 aa). The tract at residues 146-187 is disordered; the sequence is EEQRERPAVDDEDHEDAGAERQGTDRGSGGTVEVPVPATVAD.

Belongs to the NrdR family. The cofactor is Zn(2+).

Functionally, negatively regulates transcription of bacterial ribonucleotide reductase nrd genes and operons by binding to NrdR-boxes. The sequence is that of Transcriptional repressor NrdR from Streptomyces avermitilis (strain ATCC 31267 / DSM 46492 / JCM 5070 / NBRC 14893 / NCIMB 12804 / NRRL 8165 / MA-4680).